Reading from the N-terminus, the 188-residue chain is Apolipoprotein M (188 aa).

The not cleaved signal peptide spans 1 to 22 (MFHQIWAALLYLYGILLNSIYQ). Intrachain disulfides connect cysteine 23–cysteine 167, cysteine 95–cysteine 183, and cysteine 128–cysteine 157. Positions 136 and 143 each coordinate tetradecanoate.

The protein belongs to the calycin superfamily. Lipocalin family. Highly divergent. As to quaternary structure, interacts with LRP2; LRP2 mediates APOM renal uptake and subsequent lysosomal degradation.

It localises to the secreted. In terms of biological role, probably involved in lipid transport. Can bind sphingosine-1-phosphate, myristic acid, palmitic acid and stearic acid, retinol, all-trans-retinoic acid and 9-cis-retinoic acid. The chain is Apolipoprotein M (APOM) from Sus scrofa (Pig).